A 238-amino-acid polypeptide reads, in one-letter code: Leucyl/phenylalanyl-tRNA--protein transferase (238 aa).

It belongs to the L/F-transferase family.

The protein resides in the cytoplasm. It carries out the reaction N-terminal L-lysyl-[protein] + L-leucyl-tRNA(Leu) = N-terminal L-leucyl-L-lysyl-[protein] + tRNA(Leu) + H(+). The enzyme catalyses N-terminal L-arginyl-[protein] + L-leucyl-tRNA(Leu) = N-terminal L-leucyl-L-arginyl-[protein] + tRNA(Leu) + H(+). The catalysed reaction is L-phenylalanyl-tRNA(Phe) + an N-terminal L-alpha-aminoacyl-[protein] = an N-terminal L-phenylalanyl-L-alpha-aminoacyl-[protein] + tRNA(Phe). In terms of biological role, functions in the N-end rule pathway of protein degradation where it conjugates Leu, Phe and, less efficiently, Met from aminoacyl-tRNAs to the N-termini of proteins containing an N-terminal arginine or lysine. The sequence is that of Leucyl/phenylalanyl-tRNA--protein transferase from Psychromonas ingrahamii (strain DSM 17664 / CCUG 51855 / 37).